The sequence spans 302 residues: Probable alpha-L-glutamate ligase (302 aa).

The ATP-grasp domain maps to 105-288 (LQLLARKGIP…LAGKIIEYIE (184 aa)). Residues K142, 179–180 (EF), D188, and 212–214 (RAN) contribute to the ATP site. Residues D249, E261, and N263 each coordinate Mg(2+). The Mn(2+) site is built by D249, E261, and N263.

This sequence belongs to the RimK family. Mg(2+) serves as cofactor. Requires Mn(2+) as cofactor.

The protein is Probable alpha-L-glutamate ligase of Legionella pneumophila (strain Paris).